We begin with the raw amino-acid sequence, 847 residues long: Acyl-homoserine lactone acylase QuiP (847 aa).

The signal sequence occupies residues Met1–Ala26. The Nucleophile role is filled by Ser265.

Belongs to the peptidase S45 family. In terms of assembly, heterodimer of an alpha subunit and a beta subunit processed from the same precursor.

The protein resides in the periplasm. It catalyses the reaction an N-acyl-L-homoserine lactone + H2O = L-homoserine lactone + a carboxylate. Functionally, catalyzes the deacylation of acyl-homoserine lactone (AHL or acyl-HSL), releasing homoserine lactone (HSL) and the corresponding fatty acid. Possesses a specificity for the degradation of long-chain acyl-HSLs (side chains of seven or more carbons in length). Appears to be the acyl-HSL acylase that underlies the ability of P.aeruginosa to degrade and utilize certain acyl-HSLs as growth nutrients, including one of its own quorum signals, 3-oxo-C12-HSL. Is thought to have a role in quorum quenching. This is Acyl-homoserine lactone acylase QuiP (quiP) from Pseudomonas aeruginosa (strain ATCC 15692 / DSM 22644 / CIP 104116 / JCM 14847 / LMG 12228 / 1C / PRS 101 / PAO1).